Here is a 641-residue protein sequence, read N- to C-terminus: E3 ubiquitin-protein ligase TRIM47 (641 aa).

An RING-type zinc finger spans residues 9 to 58 (CPICLEPLREPVTLPCGHNFCLACLGALWPHRSAGGTGGSGGPARCPLCQ). A Phosphothreonine modification is found at Thr-72. Positions 81–123 (QGSVPGPMSAPASGSTRGATPEPSAPSAPPPAPEPSAPCAPEQ) are disordered. Pro residues predominate over residues 103 to 118 (PSAPSAPPPAPEPSAP). The B box-type zinc-finger motif lies at 181–221 (LEESLCPRHLRPLERYCRVERVCLCEACATQDHRGHELVPL). Residues Cys-186, His-189, Cys-208, and His-213 each contribute to the Zn(2+) site. The stretch at 305-325 (QGDLRRQEEQRSRLSKARHNL) forms a coiled coil. Position 393 is a phosphoserine (Ser-393). Residues 396–416 (DGLQKLGSEDVESQDPDSTSL) form a disordered region. The B30.2/SPRY domain occupies 413 to 634 (STSLLESEAP…LQIGPLKKSC (222 aa)). Ser-464 carries the post-translational modification Phosphoserine. Residue Arg-585 is modified to Omega-N-methylarginine. Phosphoserine is present on Ser-591.

This sequence belongs to the TRIM/RBCC family. In terms of tissue distribution, expressed in hepatocytes, expression is increased in fatty livers.

It localises to the cytoplasm. It is found in the nucleus. The enzyme catalyses S-ubiquitinyl-[E2 ubiquitin-conjugating enzyme]-L-cysteine + [acceptor protein]-L-lysine = [E2 ubiquitin-conjugating enzyme]-L-cysteine + N(6)-ubiquitinyl-[acceptor protein]-L-lysine.. The protein operates within protein modification; protein ubiquitination. E3 ubiquitin-protein ligase that mediates the ubiquitination and proteasomal degradation of CYLD. This Mus musculus (Mouse) protein is E3 ubiquitin-protein ligase TRIM47.